We begin with the raw amino-acid sequence, 1404 residues long: DNA-directed RNA polymerase subunit beta' (1404 aa).

Residues cysteine 70, cysteine 72, cysteine 85, and cysteine 88 each coordinate Zn(2+). Mg(2+) contacts are provided by aspartate 460, aspartate 462, and aspartate 464. The Zn(2+) site is built by cysteine 814, cysteine 888, cysteine 895, and cysteine 898.

This sequence belongs to the RNA polymerase beta' chain family. In terms of assembly, the RNAP catalytic core consists of 2 alpha, 1 beta, 1 beta' and 1 omega subunit. When a sigma factor is associated with the core the holoenzyme is formed, which can initiate transcription. It depends on Mg(2+) as a cofactor. Requires Zn(2+) as cofactor.

It carries out the reaction RNA(n) + a ribonucleoside 5'-triphosphate = RNA(n+1) + diphosphate. DNA-dependent RNA polymerase catalyzes the transcription of DNA into RNA using the four ribonucleoside triphosphates as substrates. This chain is DNA-directed RNA polymerase subunit beta', found in Shewanella halifaxensis (strain HAW-EB4).